The sequence spans 433 residues: Zinc finger and SCAN domain-containing protein 4 (433 aa).

The SCAN box domain maps to R44 to S126. Polar residues-rich tracts occupy residues S162–E184 and Q277–C298. 2 disordered regions span residues S162–S199 and A272–C298. 4 C2H2-type zinc fingers span residues Y312 to H334, F340 to H362, F368 to H390, and Y396 to H418. The disordered stretch occupies residues H414 to S433.

The protein resides in the nucleus. Its subcellular location is the chromosome. The protein localises to the telomere. Its function is as follows. Embryonic stem (ES) cell-specific transcription factor required to regulate ES cell pluripotency. Binds telomeres and plays a key role in genomic stability in ES cells by regulating telomere elongation. Acts as an activator of spontaneous telomere sister chromatid exchange (T-SCE) and telomere elongation in undifferentiated ES cells. The polypeptide is Zinc finger and SCAN domain-containing protein 4 (ZSCAN4) (Pongo pygmaeus (Bornean orangutan)).